Reading from the N-terminus, the 332-residue chain is Glyceraldehyde-3-phosphate dehydrogenase 2 (332 aa).

NAD(+) is bound by residues 11–12, Asp-32, and Arg-77; that span reads RI. D-glyceraldehyde 3-phosphate-binding positions include 148-150, Thr-179, 208-209, and Arg-231; these read SCT and TG. Residue Cys-149 is the Nucleophile of the active site. At Tyr-273 the chain carries Phosphotyrosine. The residue at position 274 (Thr-274) is a Phosphothreonine. Asn-313 serves as a coordination point for NAD(+).

It belongs to the glyceraldehyde-3-phosphate dehydrogenase family. Homotetramer.

It localises to the cytoplasm. It carries out the reaction D-glyceraldehyde 3-phosphate + phosphate + NAD(+) = (2R)-3-phospho-glyceroyl phosphate + NADH + H(+). Its pathway is carbohydrate degradation; glycolysis; pyruvate from D-glyceraldehyde 3-phosphate: step 1/5. This is Glyceraldehyde-3-phosphate dehydrogenase 2 (Gapdh2) from Drosophila melanogaster (Fruit fly).